Consider the following 139-residue polypeptide: Transcription antitermination protein NusB (139 aa).

The protein belongs to the NusB family.

Functionally, involved in transcription antitermination. Required for transcription of ribosomal RNA (rRNA) genes. Binds specifically to the boxA antiterminator sequence of the ribosomal RNA (rrn) operons. The sequence is that of Transcription antitermination protein NusB from Salmonella agona (strain SL483).